The sequence spans 1063 residues: Presequence protease, mitochondrial (1063 aa).

The N-terminal 33 residues, 1–33 (MLRLANRVSRKDSGNLGIAQLKKRLLATSGVSQ), are a transit peptide targeting the mitochondrion. His105 serves as a coordination point for Zn(2+). Glu108 (proton acceptor) is an active-site residue. His109 is a Zn(2+) binding site. The active site involves Glu181. A Zn(2+)-binding site is contributed by Glu206.

It belongs to the peptidase M16 family. PreP subfamily. Monomer and homodimer; homodimerization is induced by binding of the substrate. Requires Zn(2+) as cofactor.

The protein resides in the mitochondrion intermembrane space. It localises to the mitochondrion matrix. In terms of biological role, degrades mitochondrial transit peptides after their cleavage in the intermembrane space or in the matrix, and presequence peptides; clearance of these peptides is required to keep the presequence processing machinery running. Preferentially cleaves the N-terminal side of paired basic amino acid residues. Also degrades other unstructured peptides. May function as an ATP-dependent peptidase as opposed to a metalloendopeptidase. The sequence is that of Presequence protease, mitochondrial (CYM1) from Debaryomyces hansenii (strain ATCC 36239 / CBS 767 / BCRC 21394 / JCM 1990 / NBRC 0083 / IGC 2968) (Yeast).